A 184-amino-acid polypeptide reads, in one-letter code: Gremlin-1 (184 aa).

The first 24 residues, 1-24 (MSRTAYTVGALLLLLGTLLPAAEG), serve as a signal peptide directing secretion. The tract at residues 24–77 (GKKKGSQGAIPPPDKAQHNDSEQTQSPQQPGSRNRGRGQGRGTAMPGEEVLESS) is disordered. Asn-42 carries an N-linked (GlcNAc...) asparagine glycan. 4 disulfides stabilise this stretch: Cys-94/Cys-144, Cys-108/Cys-158, Cys-118/Cys-176, and Cys-122/Cys-178. The 91-residue stretch at 94-184 (CKTQPLKQTI…QCRCISIDLD (91 aa)) folds into the CTCK domain.

Belongs to the DAN family. As to quaternary structure, homodimer; can also form homooligomers. Interacts with BMP2; can form higher oligomers with BMP2. Interacts with SLIT1 and SLIT2 in a glycosylation-dependent manner. As to expression, highly expressed in small intestine, fetal brain and colon. Expression is restricted to intestinal subepithelial myofibroblasts (ISEMFs) at the crypt base. In subjects with HMPS1, by contrast, GREM1 is expressed, not only in basal ISEMFs, but also at very high levels in epithelial cells (predominantly colonocytes), with expression extending most of the way up the sides of the crypt. Weakly expressed in brain, ovary, prostate, pancreas and skeletal muscle. In brain found in the region localized around the internal capsule in the large subcortical nuclei, including caudate, putamen, substantia nigra, thalamus and subthalamus. Predominantly expressed in normal cells including neurons, astrocytes and fibroblasts.

The protein localises to the secreted. In terms of biological role, cytokine that may play an important role during carcinogenesis and metanephric kidney organogenesis, as a BMP antagonist required for early limb outgrowth and patterning in maintaining the FGF4-SHH feedback loop. Down-regulates the BMP4 signaling in a dose-dependent manner. Antagonist of BMP2; inhibits BMP2-mediated differentiation of osteoblasts (in vitro). Acts as inhibitor of monocyte chemotaxis. Can inhibit the growth or viability of normal cells but not transformed cells when is overexpressed. This is Gremlin-1 (GREM1) from Homo sapiens (Human).